Here is a 327-residue protein sequence, read N- to C-terminus: Tetraacyldisaccharide 4'-kinase (327 aa).

56–63 (FVGGTGKT) contacts ATP.

This sequence belongs to the LpxK family.

The enzyme catalyses a lipid A disaccharide + ATP = a lipid IVA + ADP + H(+). Its pathway is glycolipid biosynthesis; lipid IV(A) biosynthesis; lipid IV(A) from (3R)-3-hydroxytetradecanoyl-[acyl-carrier-protein] and UDP-N-acetyl-alpha-D-glucosamine: step 6/6. Transfers the gamma-phosphate of ATP to the 4'-position of a tetraacyldisaccharide 1-phosphate intermediate (termed DS-1-P) to form tetraacyldisaccharide 1,4'-bis-phosphate (lipid IVA). This Halorhodospira halophila (strain DSM 244 / SL1) (Ectothiorhodospira halophila (strain DSM 244 / SL1)) protein is Tetraacyldisaccharide 4'-kinase.